A 545-amino-acid polypeptide reads, in one-letter code: Chaperonin GroEL (545 aa).

ATP is bound by residues T30–P33, K51, D87–T91, G415, and D495.

This sequence belongs to the chaperonin (HSP60) family. Forms a cylinder of 14 subunits composed of two heptameric rings stacked back-to-back. Interacts with the co-chaperonin GroES.

The protein localises to the cytoplasm. The enzyme catalyses ATP + H2O + a folded polypeptide = ADP + phosphate + an unfolded polypeptide.. Together with its co-chaperonin GroES, plays an essential role in assisting protein folding. The GroEL-GroES system forms a nano-cage that allows encapsulation of the non-native substrate proteins and provides a physical environment optimized to promote and accelerate protein folding. This Yersinia pestis bv. Antiqua (strain Antiqua) protein is Chaperonin GroEL.